Consider the following 634-residue polypeptide: 1-deoxy-D-xylulose-5-phosphate synthase (634 aa).

Residues histidine 74 and 115–117 (AHS) contribute to the thiamine diphosphate site. Residue aspartate 146 participates in Mg(2+) binding. Residues 147–148 (GA), asparagine 176, tyrosine 283, and glutamate 365 each bind thiamine diphosphate. Asparagine 176 provides a ligand contact to Mg(2+).

Belongs to the transketolase family. DXPS subfamily. In terms of assembly, homodimer. Mg(2+) is required as a cofactor. Requires thiamine diphosphate as cofactor.

The enzyme catalyses D-glyceraldehyde 3-phosphate + pyruvate + H(+) = 1-deoxy-D-xylulose 5-phosphate + CO2. Its pathway is metabolic intermediate biosynthesis; 1-deoxy-D-xylulose 5-phosphate biosynthesis; 1-deoxy-D-xylulose 5-phosphate from D-glyceraldehyde 3-phosphate and pyruvate: step 1/1. Functionally, catalyzes the acyloin condensation reaction between C atoms 2 and 3 of pyruvate and glyceraldehyde 3-phosphate to yield 1-deoxy-D-xylulose-5-phosphate (DXP). This chain is 1-deoxy-D-xylulose-5-phosphate synthase, found in Burkholderia orbicola (strain MC0-3).